The following is a 390-amino-acid chain: GTPase Obg (390 aa).

The 159-residue stretch at 1–159 (MKFVDEATIL…RDLQLELMLL (159 aa)) folds into the Obg domain. The interval 127 to 146 (NTRFKSSVNRTPRQKTMGTP) is disordered. Positions 129–143 (RFKSSVNRTPRQKTM) are enriched in polar residues. Residues 160-333 (ADVGMLGMPN…LCWDVMHFII (174 aa)) form the OBG-type G domain. GTP-binding positions include 166-173 (GMPNAGKS), 191-195 (FTTLV), 213-216 (DIPG), 283-286 (NKID), and 314-316 (SAA). Residues Ser173 and Thr193 each coordinate Mg(2+). Over residues 364–384 (MEAEAEEEWDDDWDEDDDEGV) the composition is skewed to acidic residues. The tract at residues 364–390 (MEAEAEEEWDDDWDEDDDEGVEIVYQR) is disordered.

This sequence belongs to the TRAFAC class OBG-HflX-like GTPase superfamily. OBG GTPase family. Monomer. Requires Mg(2+) as cofactor.

It localises to the cytoplasm. Functionally, an essential GTPase which binds GTP, GDP and possibly (p)ppGpp with moderate affinity, with high nucleotide exchange rates and a fairly low GTP hydrolysis rate. Plays a role in control of the cell cycle, stress response, ribosome biogenesis and in those bacteria that undergo differentiation, in morphogenesis control. The protein is GTPase Obg of Cronobacter sakazakii (strain ATCC BAA-894) (Enterobacter sakazakii).